Here is a 430-residue protein sequence, read N- to C-terminus: Bifunctional protein GlmU (430 aa).

The segment at 1 to 223 (MSISVVILAA…EEEFKGVNSK (223 aa)) is pyrophosphorylase. Residues 8–11 (LAAG), Lys22, and 81–82 (GT) each bind UDP-N-acetyl-alpha-D-glucosamine. Mg(2+) is bound at residue Asp102. UDP-N-acetyl-alpha-D-glucosamine contacts are provided by Gly135, Glu149, Asn164, and Asn221. Asn221 contributes to the Mg(2+) binding site. A linker region spans residues 224 to 244 (LDLARAEEIMQRRIKEALMMA). The segment at 245–430 (GVTMCLPETI…NFFYKFFGDK (186 aa)) is N-acetyltransferase. UDP-N-acetyl-alpha-D-glucosamine is bound by residues Arg308 and Lys325. The active-site Proton acceptor is His336. UDP-N-acetyl-alpha-D-glucosamine-binding residues include Tyr339 and Asn350. Acetyl-CoA-binding positions include Ala353, 359-360 (NY), Ser378, Ala396, and Arg413.

The protein in the N-terminal section; belongs to the N-acetylglucosamine-1-phosphate uridyltransferase family. In the C-terminal section; belongs to the transferase hexapeptide repeat family. Homotrimer. Mg(2+) is required as a cofactor.

Its subcellular location is the cytoplasm. The catalysed reaction is alpha-D-glucosamine 1-phosphate + acetyl-CoA = N-acetyl-alpha-D-glucosamine 1-phosphate + CoA + H(+). It catalyses the reaction N-acetyl-alpha-D-glucosamine 1-phosphate + UTP + H(+) = UDP-N-acetyl-alpha-D-glucosamine + diphosphate. It functions in the pathway nucleotide-sugar biosynthesis; UDP-N-acetyl-alpha-D-glucosamine biosynthesis; N-acetyl-alpha-D-glucosamine 1-phosphate from alpha-D-glucosamine 6-phosphate (route II): step 2/2. The protein operates within nucleotide-sugar biosynthesis; UDP-N-acetyl-alpha-D-glucosamine biosynthesis; UDP-N-acetyl-alpha-D-glucosamine from N-acetyl-alpha-D-glucosamine 1-phosphate: step 1/1. Its pathway is bacterial outer membrane biogenesis; LPS lipid A biosynthesis. Catalyzes the last two sequential reactions in the de novo biosynthetic pathway for UDP-N-acetylglucosamine (UDP-GlcNAc). The C-terminal domain catalyzes the transfer of acetyl group from acetyl coenzyme A to glucosamine-1-phosphate (GlcN-1-P) to produce N-acetylglucosamine-1-phosphate (GlcNAc-1-P), which is converted into UDP-GlcNAc by the transfer of uridine 5-monophosphate (from uridine 5-triphosphate), a reaction catalyzed by the N-terminal domain. The sequence is that of Bifunctional protein GlmU from Sulfurovum sp. (strain NBC37-1).